The chain runs to 108 residues: ATP synthase peripheral stalk subunit F6, mitochondrial (108 aa).

The N-terminal 32 residues, 1-32, are a transit peptide targeting the mitochondrion; it reads MILQRLFRFSSIIRSAVSVHFRRNIGVTAVAF. N6-acetyllysine occurs at positions 41, 46, and 79. An N6-acetyllysine; alternate mark is found at Lys-84, Lys-94, and Lys-99. N6-succinyllysine; alternate occurs at positions 84, 94, and 99. An N6-acetyllysine modification is found at Lys-105.

This sequence belongs to the eukaryotic ATPase subunit F6 family. In terms of assembly, component of the ATP synthase complex composed at least of ATP5F1A/subunit alpha, ATP5F1B/subunit beta, ATP5MC1/subunit c (homooctomer), MT-ATP6/subunit a, MT-ATP8/subunit 8, ATP5ME/subunit e, ATP5MF/subunit f, ATP5MG/subunit g, ATP5MK/subunit k, ATP5MJ/subunit j, ATP5F1C/subunit gamma, ATP5F1D/subunit delta, ATP5F1E/subunit epsilon, ATP5PF/subunit F6, ATP5PB/subunit b, ATP5PD/subunit d, ATP5PO/subunit OSCP. ATP synthase complex consists of a soluble F(1) head domain (subunits alpha(3) and beta(3)) - the catalytic core - and a membrane F(0) domain - the membrane proton channel (subunits c, a, 8, e, f, g, k and j). These two domains are linked by a central stalk (subunits gamma, delta, and epsilon) rotating inside the F1 region and a stationary peripheral stalk (subunits F6, b, d, and OSCP).

Its subcellular location is the mitochondrion. It is found in the mitochondrion inner membrane. In terms of biological role, subunit F6, of the mitochondrial membrane ATP synthase complex (F(1)F(0) ATP synthase or Complex V) that produces ATP from ADP in the presence of a proton gradient across the membrane which is generated by electron transport complexes of the respiratory chain. ATP synthase complex consist of a soluble F(1) head domain - the catalytic core - and a membrane F(1) domain - the membrane proton channel. These two domains are linked by a central stalk rotating inside the F(1) region and a stationary peripheral stalk. During catalysis, ATP synthesis in the catalytic domain of F(1) is coupled via a rotary mechanism of the central stalk subunits to proton translocation. In vivo, can only synthesize ATP although its ATP hydrolase activity can be activated artificially in vitro. Part of the complex F(0) domain. Part of the complex F(0) domain and the peripheric stalk, which acts as a stator to hold the catalytic alpha(3)beta(3) subcomplex and subunit a/ATP6 static relative to the rotary elements. This chain is ATP synthase peripheral stalk subunit F6, mitochondrial, found in Macaca fascicularis (Crab-eating macaque).